Consider the following 247-residue polypeptide: 2,3-bisphosphoglycerate-dependent phosphoglycerate mutase (247 aa).

Residues Arg-8–Asn-15, Thr-21–Gly-22, Arg-60, Glu-87–Tyr-90, Lys-98, Arg-114–Arg-115, and Gly-183–Asn-184 each bind substrate. The Tele-phosphohistidine intermediate role is filled by His-9. Glu-87 serves as the catalytic Proton donor/acceptor.

Belongs to the phosphoglycerate mutase family. BPG-dependent PGAM subfamily. In terms of assembly, homodimer.

It carries out the reaction (2R)-2-phosphoglycerate = (2R)-3-phosphoglycerate. The protein operates within carbohydrate degradation; glycolysis; pyruvate from D-glyceraldehyde 3-phosphate: step 3/5. Catalyzes the interconversion of 2-phosphoglycerate and 3-phosphoglycerate. The chain is 2,3-bisphosphoglycerate-dependent phosphoglycerate mutase from Acidovorax ebreus (strain TPSY) (Diaphorobacter sp. (strain TPSY)).